Reading from the N-terminus, the 875-residue chain is Probable inorganic carbon transporter subunit DabA (875 aa).

The Zn(2+) site is built by Cys-399, Asp-401, His-581, and Cys-596.

This sequence belongs to the inorganic carbon transporter (TC 9.A.2) DabA family. As to quaternary structure, forms a complex with DabB. Zn(2+) is required as a cofactor.

It localises to the cell membrane. In terms of biological role, part of an energy-coupled inorganic carbon pump. The protein is Probable inorganic carbon transporter subunit DabA of Bacillus thuringiensis (strain Al Hakam).